Here is a 192-residue protein sequence, read N- to C-terminus: Fe/S biogenesis protein NfuA (192 aa).

[4Fe-4S] cluster-binding residues include Cys149 and Cys152.

It belongs to the NfuA family. As to quaternary structure, homodimer. Requires [4Fe-4S] cluster as cofactor.

Its function is as follows. Involved in iron-sulfur cluster biogenesis. Binds a 4Fe-4S cluster, can transfer this cluster to apoproteins, and thereby intervenes in the maturation of Fe/S proteins. Could also act as a scaffold/chaperone for damaged Fe/S proteins. This chain is Fe/S biogenesis protein NfuA, found in Shewanella putrefaciens (strain CN-32 / ATCC BAA-453).